Here is a 918-residue protein sequence, read N- to C-terminus: Hexokinase-1 (918 aa).

N-acetylmethionine is present on Met1. Residues 1–10 form a mitochondrial-binding peptide (MBP) region; the sequence is MIAAQLLAYY. 2 Hexokinase domains span residues 16-458 and 464-906; these read DDQV…MVTA and AEQH…LITA. Residues Arg30 and 84 to 89 each bind ATP; that span reads DLGGSS. Residues 73–207 are hexokinase small subdomain 1; sequence DGSEKGDFIA…DYDANIVAVV (135 aa). 84-91 provides a ligand contact to D-glucose 6-phosphate; that stretch reads DLGGSSFR. D-glucose contacts are provided by residues Ser155, 172–173, and 208–209; these read TK and ND. Residues 208 to 447 are hexokinase large subdomain 1; sequence NDTVGTMIDC…SDVRFLLSES (240 aa). Residues Asp209 and Thr232 each contribute to the D-glucose 6-phosphate site. D-glucose is bound by residues Asn235, Glu260, and 291–294; that span reads QRFE. Ser337 carries the post-translational modification Phosphoserine. Residue 413 to 415 coordinates D-glucose 6-phosphate; the sequence is DGS. ATP contacts are provided by residues 425–426 and 532–537; these read RR and DLGGTN. A hexokinase small subdomain 2 region spans residues 521 to 655; the sequence is DGTEDGDFLA…EFDLDVVAVV (135 aa). 532–536 is a D-glucose 6-phosphate binding site; it reads DLGGT. D-glucose contacts are provided by residues 603-604, 620-621, and 656-657; these read SF, TK, and ND. The segment at 656–895 is hexokinase large subdomain 2; it reads NDTVGTMMTC…CNVSFLLSED (240 aa). Residues Asp657 and Thr680 each coordinate D-glucose 6-phosphate. Thr680 is a binding site for ATP. D-glucose contacts are provided by residues 682 to 683, Glu708, and Glu742; that span reads SN. Residues 747–748, 784–788, and 863–867 contribute to the ATP site; these read GI, TKFLS, and TLYKL. D-glucose 6-phosphate-binding positions include 861-863 and Ser897; that span reads DGT.

This sequence belongs to the hexokinase family. In terms of assembly, monomer. Interacts with RABL2/RABL2A; binds preferentially to GTP-bound RABL2. Interacts with VDAC1. The HK1-VDAC1 complex interacts with ATF2. Interacts (via N-terminal spermatogenic cell-specific region) with PFKM (via C-terminus). Interacts with SMAD5.

It localises to the mitochondrion outer membrane. Its subcellular location is the cytoplasm. It is found in the cytosol. It catalyses the reaction a D-hexose + ATP = a D-hexose 6-phosphate + ADP + H(+). It carries out the reaction D-fructose + ATP = D-fructose 6-phosphate + ADP + H(+). The catalysed reaction is D-glucose + ATP = D-glucose 6-phosphate + ADP + H(+). The enzyme catalyses D-mannose + ATP = D-mannose 6-phosphate + ADP + H(+). It catalyses the reaction D-glucosamine + ATP = D-glucosamine 6-phosphate + ADP + H(+). It participates in carbohydrate metabolism; hexose metabolism. Its pathway is carbohydrate degradation; glycolysis; D-glyceraldehyde 3-phosphate and glycerone phosphate from D-glucose: step 1/4. With respect to regulation, hexokinase is an allosteric enzyme inhibited by its product D-glucose 6-phosphate. Hexokinase activity is inhibited by N-acetyl-D-glucosamine. Functionally, catalyzes the phosphorylation of various hexoses, such as D-glucose, D-glucosamine, D-fructose, D-mannose and 2-deoxy-D-glucose, to hexose 6-phosphate (D-glucose 6-phosphate, D-glucosamine 6-phosphate, D-fructose 6-phosphate, D-mannose 6-phosphate and 2-deoxy-D-glucose 6-phosphate, respectively). Does not phosphorylate N-acetyl-D-glucosamine. Mediates the initial step of glycolysis by catalyzing phosphorylation of D-glucose to D-glucose 6-phosphate. Involved in innate immunity and inflammation by acting as a pattern recognition receptor for bacterial peptidoglycan. When released in the cytosol, N-acetyl-D-glucosamine component of bacterial peptidoglycan inhibits the hexokinase activity of HK1 and causes its dissociation from mitochondrial outer membrane, thereby activating the NLRP3 inflammasome. This chain is Hexokinase-1, found in Bos taurus (Bovine).